Consider the following 307-residue polypeptide: Putative lipid kinase SE_0507 (307 aa).

In terms of domain architecture, DAGKc spans 3–139; sequence QPYNHGVLFY…YDVLKVNDLY (137 aa). Residues serine 44, 74–80, and threonine 101 contribute to the ATP site; that span reads GDGTLNE. Mg(2+)-binding residues include serine 220, aspartate 223, and arginine 225. Glutamate 281 serves as the catalytic Proton acceptor.

Belongs to the diacylglycerol/lipid kinase family. Requires Mg(2+) as cofactor.

Functionally, may catalyze the ATP-dependent phosphorylation of lipids other than diacylglycerol (DAG). In Staphylococcus epidermidis (strain ATCC 12228 / FDA PCI 1200), this protein is Putative lipid kinase SE_0507.